The sequence spans 529 residues: Membrane-bound lytic murein transglycosylase F (529 aa).

An N-terminal signal peptide occupies residues Met-1–Ile-27. The interval Glu-28–Ile-287 is non-LT domain. Positions Gly-288 to Pro-529 are LT domain. Glu-332 is an active-site residue. The tract at residues Glu-510–Pro-529 is disordered. Residues Ser-519–Pro-529 are compositionally biased toward polar residues.

It in the N-terminal section; belongs to the bacterial solute-binding protein 3 family. This sequence in the C-terminal section; belongs to the transglycosylase Slt family.

Its subcellular location is the cell outer membrane. The catalysed reaction is Exolytic cleavage of the (1-&gt;4)-beta-glycosidic linkage between N-acetylmuramic acid (MurNAc) and N-acetylglucosamine (GlcNAc) residues in peptidoglycan, from either the reducing or the non-reducing ends of the peptidoglycan chains, with concomitant formation of a 1,6-anhydrobond in the MurNAc residue.. Its function is as follows. Murein-degrading enzyme that degrades murein glycan strands and insoluble, high-molecular weight murein sacculi, with the concomitant formation of a 1,6-anhydromuramoyl product. Lytic transglycosylases (LTs) play an integral role in the metabolism of the peptidoglycan (PG) sacculus. Their lytic action creates space within the PG sacculus to allow for its expansion as well as for the insertion of various structures such as secretion systems and flagella. The protein is Membrane-bound lytic murein transglycosylase F of Vibrio vulnificus (strain CMCP6).